A 908-amino-acid chain; its full sequence is 26S proteasome non-ATPase regulatory subunit 2 (908 aa).

Methionine 1 carries the post-translational modification N-acetylmethionine. Positions 1 to 52 are disordered; it reads MEEGGRDKAPVQPQQSPAAAPGGTDEKPSGKERRDAGDKDKEQELSEEDKQL. A compositionally biased stretch (low complexity) spans 10 to 21; the sequence is PVQPQQSPAAAP. Serine 16 is modified (phosphoserine). Threonine 24 is modified (phosphothreonine). Residues 24–52 show a composition bias toward basic and acidic residues; that stretch reads TDEKPSGKERRDAGDKDKEQELSEEDKQL. Serine 29 and serine 147 each carry phosphoserine. Phosphotyrosine is present on tyrosine 194. Residues serine 361 and serine 363 each carry the phosphoserine modification. 5 PC repeats span residues 409–442, 443–479, 480–514, 517–551, and 560–589; these read SAAA…YIKS, GALL…TMRL, GSIF…SMEV, VTAL…TELK, and LGLG…PFRS. The residue at position 551 (lysine 551) is an N6-acetyllysine. Over residues 623 to 643 the composition is skewed to basic and acidic residues; that stretch reads KEKEEDKDKKEKKDKDKKEAP. Residues 623 to 645 form a disordered region; sequence KEKEEDKDKKEKKDKDKKEAPAD. PC repeat units lie at residues 692–723 and 742–757; these read LALA…EVSY and AAML…KDPN. The tract at residues 708–903 is required for interaction with UBLCP1; it reads DTLSKFSHDA…LEGFVILRKN (196 aa).

Belongs to the proteasome subunit S2 family. As to quaternary structure, component of the 19S proteasome regulatory particle complex. The 26S proteasome consists of a 20S core particle (CP) and two 19S regulatory subunits (RP). The regulatory particle is made of a lid composed of 9 subunits, a base containing 6 ATPases and few additional components including PSMD2. Interacts with RPGRIP1L. Interacts with CRY1 in a KDM8-dependent manner. Interacts (via C-terminus) with phosphatase UBLCP1 (via ubiquitin-like domain); the interaction recruits UBLCP1 to the 19S regulatory particle where it dephosphorylates 19S subunit PSMC2/RPT1 which impairs PSMC2 ATPase activity and disrupts 26S proteasome assembly. Found in skeletal muscle, liver, heart, brain, kidney, pancreas, lung and placenta.

Its function is as follows. Component of the 26S proteasome, a multiprotein complex involved in the ATP-dependent degradation of ubiquitinated proteins. This complex plays a key role in the maintenance of protein homeostasis by removing misfolded or damaged proteins, which could impair cellular functions, and by removing proteins whose functions are no longer required. Therefore, the proteasome participates in numerous cellular processes, including cell cycle progression, apoptosis, or DNA damage repair. Binds to the intracellular domain of tumor necrosis factor type 1 receptor. The binding domain of TRAP1 and TRAP2 resides outside the death domain of TNFR1. In Homo sapiens (Human), this protein is 26S proteasome non-ATPase regulatory subunit 2 (PSMD2).